The primary structure comprises 224 residues: Na(+)-translocating NADH-quinone reductase subunit D (224 aa).

Helical transmembrane passes span 43–63 (TVMA…ISMI), 67–87 (IPSS…VIVV), 104–124 (VFVG…AFAM), 132–152 (FFDG…LGFV), and 179–199 (NGLL…IWAL).

The protein belongs to the NqrDE/RnfAE family. As to quaternary structure, composed of six subunits; NqrA, NqrB, NqrC, NqrD, NqrE and NqrF.

It is found in the cell inner membrane. The enzyme catalyses a ubiquinone + n Na(+)(in) + NADH + H(+) = a ubiquinol + n Na(+)(out) + NAD(+). Its function is as follows. NQR complex catalyzes the reduction of ubiquinone-1 to ubiquinol by two successive reactions, coupled with the transport of Na(+) ions from the cytoplasm to the periplasm. NqrA to NqrE are probably involved in the second step, the conversion of ubisemiquinone to ubiquinol. In Pseudomonas aeruginosa (strain LESB58), this protein is Na(+)-translocating NADH-quinone reductase subunit D.